The primary structure comprises 87 residues: Large ribosomal subunit protein eL33 (87 aa).

This sequence belongs to the eukaryotic ribosomal protein eL33 family.

The sequence is that of Large ribosomal subunit protein eL33 from Pyrococcus woesei.